The chain runs to 277 residues: S-formylglutathione hydrolase FrmB (277 aa).

Catalysis depends on charge relay system residues Ser-145, Asp-221, and His-254.

This sequence belongs to the esterase D family.

It catalyses the reaction S-formylglutathione + H2O = formate + glutathione + H(+). Its function is as follows. Serine hydrolase involved in the detoxification of formaldehyde. Hydrolyzes S-formylglutathione to glutathione and formate. The polypeptide is S-formylglutathione hydrolase FrmB (frmB) (Escherichia coli (strain SMS-3-5 / SECEC)).